The following is a 243-amino-acid chain: Ubiquinone/menaquinone biosynthesis C-methyltransferase UbiE (243 aa).

S-adenosyl-L-methionine is bound by residues Thr69, Asp90, and 116 to 117; that span reads DA.

It belongs to the class I-like SAM-binding methyltransferase superfamily. MenG/UbiE family.

The enzyme catalyses a 2-demethylmenaquinol + S-adenosyl-L-methionine = a menaquinol + S-adenosyl-L-homocysteine + H(+). It carries out the reaction a 2-methoxy-6-(all-trans-polyprenyl)benzene-1,4-diol + S-adenosyl-L-methionine = a 5-methoxy-2-methyl-3-(all-trans-polyprenyl)benzene-1,4-diol + S-adenosyl-L-homocysteine + H(+). It participates in quinol/quinone metabolism; menaquinone biosynthesis; menaquinol from 1,4-dihydroxy-2-naphthoate: step 2/2. Its pathway is cofactor biosynthesis; ubiquinone biosynthesis. In terms of biological role, methyltransferase required for the conversion of demethylmenaquinol (DMKH2) to menaquinol (MKH2) and the conversion of 2-polyprenyl-6-methoxy-1,4-benzoquinol (DDMQH2) to 2-polyprenyl-3-methyl-6-methoxy-1,4-benzoquinol (DMQH2). The polypeptide is Ubiquinone/menaquinone biosynthesis C-methyltransferase UbiE (Ralstonia pickettii (strain 12J)).